A 906-amino-acid polypeptide reads, in one-letter code: Kinesin-like protein KIN-7G (906 aa).

The region spanning 26-344 (SVAVAVRFRP…LKFAHRAKHI (319 aa)) is the Kinesin motor domain. 105 to 112 (GVTSSGKT) lines the ATP pocket. 3 coiled-coil regions span residues 346 to 385 (IQAT…RTGT), 733 to 814 (SDEF…GRNQ), and 839 to 875 (GDMN…LEKE). The disordered stretch occupies residues 803–840 (RLSSELASGRNQRRGSHGPRGARRESHTKRYEPARRGD). Residues 813–823 (NQRRGSHGPRG) are compositionally biased toward basic residues. Residues 824–840 (ARRESHTKRYEPARRGD) are compositionally biased toward basic and acidic residues.

This sequence belongs to the TRAFAC class myosin-kinesin ATPase superfamily. Kinesin family. KIN-7 subfamily.

The protein is Kinesin-like protein KIN-7G of Oryza sativa subsp. japonica (Rice).